A 117-amino-acid polypeptide reads, in one-letter code: Large ribosomal subunit protein bL19 (117 aa).

It belongs to the bacterial ribosomal protein bL19 family.

Its function is as follows. This protein is located at the 30S-50S ribosomal subunit interface and may play a role in the structure and function of the aminoacyl-tRNA binding site. This is Large ribosomal subunit protein bL19 from Halorhodospira halophila (strain DSM 244 / SL1) (Ectothiorhodospira halophila (strain DSM 244 / SL1)).